A 210-amino-acid chain; its full sequence is uncharacterized protein (210 aa).

This is an uncharacterized protein from Escherichia coli (strain K12).